Consider the following 391-residue polypeptide: Phosphoglycerate kinase (391 aa).

Substrate-binding positions include 21–23, Arg-36, 59–62, Arg-113, and Arg-146; these read DLN and HLGR. Residues Lys-197, Glu-319, and 345–348 each bind ATP; that span reads GGDT.

Belongs to the phosphoglycerate kinase family. In terms of assembly, monomer.

The protein resides in the cytoplasm. It catalyses the reaction (2R)-3-phosphoglycerate + ATP = (2R)-3-phospho-glyceroyl phosphate + ADP. It functions in the pathway carbohydrate degradation; glycolysis; pyruvate from D-glyceraldehyde 3-phosphate: step 2/5. The polypeptide is Phosphoglycerate kinase (Shewanella denitrificans (strain OS217 / ATCC BAA-1090 / DSM 15013)).